We begin with the raw amino-acid sequence, 1121 residues long: tRNA (34-2'-O)-methyltransferase regulator WDR6 (1121 aa).

The residue at position 1 (Met-1) is an N-acetylmethionine. WD repeat units follow at residues 53–97 (IKRV…VVKI), 105–143 (WELWRSGLWNMSDWIWDARWLEGNIALALGHNSVVLYDP), 147–189 (CILQ…VWYP), 200–238 (APDRRISGHVGIIFSMSYLESKGLLATASEDRSVRIWKV), 247–285 (RVQNIGHCFGHSARVWQVKLLENYLISAGEDCVCLVWSH), 289–327 (ILQAFRGHQGRGIRAIAAHERQAWVITGGDDSGIRLWHL), 335–376 (LGVS…LYDV), 381–422 (WEQL…VVPI), 425–470 (PTAA…ISAA), 476–520 (IFVK…LFPS), 559–598 (PVSTLPSLHGKQGVTSVTCHGGYVYTTGRDGAYYQLFVRD), 604–642 (VLRQKSCRGMNWLAGLRIVPDGSMVILGFHANEFVVWNP), 645–684 (HEKLHIVNCGGGHRSWAFSDTEAAMAFAYLKDGDVMLYRA), 739–785 (LTDI…VWGI), 848–893 (RNRH…LFLL), 901–946 (QLLA…FWDL), 970–1012 (GTPS…VFVL), 1036–1073 (EEYSVPCAHAAHVTGLKILSPSIMVSASIDQRLTFWRL), and 1079–1121 (TFMN…NWYD).

The protein belongs to the WD repeat WDR6 family. Interacts with FTSJ1; the interaction is direct, and required for 2'-O-methylation of position 34 in substrate tRNAs. Interacts with IRS4. Interacts with STK11/LKB1. As to expression, ubiquitous.

It is found in the cytoplasm. Functionally, together with methyltransferase FTSJ1, methylates the 2'-O-ribose of nucleotides at position 34 of the tRNA anticodon loop of substrate tRNAs. Required for the correct positioning of the substrate tRNA for methylation. Required to suppress amino acid starvation-induced autophagy. Enhances the STK11/LKB1-induced cell growth suppression activity. This Homo sapiens (Human) protein is tRNA (34-2'-O)-methyltransferase regulator WDR6 (WDR6).